The primary structure comprises 285 residues: MDDSLRVSVLSEALPYIQRFAGRRIVVKYGGAAMVHAELRDAVFRDIALLASVGVQPVVVHGGGPEINTWLKRLDIRSEFRDGLRVTDAETMDVVEMVLVGRVNKQIVNGLNRLGASAVGLSGSDGRLVEARPWGDGNHGLVGDVARVNPDVLEPLLARGYVPVISSVAANPEGESHNINADTVAGELAAALEAEKLILLTDTQGILRDRDNPNSLIRQLRLSEARQLIHDGVVAGGMTPKTECCIRALAQGVAAAHIVDGRVPHALLLEVFTDAGIGTMVLGCG.

Residues 63 to 64 (GG), Arg85, and Asn178 contribute to the substrate site.

This sequence belongs to the acetylglutamate kinase family. ArgB subfamily.

Its subcellular location is the cytoplasm. The catalysed reaction is N-acetyl-L-glutamate + ATP = N-acetyl-L-glutamyl 5-phosphate + ADP. Its pathway is amino-acid biosynthesis; L-arginine biosynthesis; N(2)-acetyl-L-ornithine from L-glutamate: step 2/4. Catalyzes the ATP-dependent phosphorylation of N-acetyl-L-glutamate. In Synechococcus sp. (strain CC9311), this protein is Acetylglutamate kinase.